Consider the following 172-residue polypeptide: Lipoprotein signal peptidase (172 aa).

The next 4 helical transmembrane spans lie at 12 to 32, 43 to 63, 77 to 97, and 102 to 122; these read TSAANGSLAPWLGVALIVILF, VFAYGVAHEVTSFFNLILVYN, WQRWAFTALGVVAALVICYLL, and GQKMFCTALALILGGALGNVI. Residues Asp-132 and Asp-150 contribute to the active site. A helical transmembrane segment spans residues 142–162; that stretch reads HWPAFNLADSAITVGAVLLVL.

The protein belongs to the peptidase A8 family.

The protein localises to the cell inner membrane. It catalyses the reaction Release of signal peptides from bacterial membrane prolipoproteins. Hydrolyzes -Xaa-Yaa-Zaa-|-(S,diacylglyceryl)Cys-, in which Xaa is hydrophobic (preferably Leu), and Yaa (Ala or Ser) and Zaa (Gly or Ala) have small, neutral side chains.. Its pathway is protein modification; lipoprotein biosynthesis (signal peptide cleavage). In terms of biological role, this protein specifically catalyzes the removal of signal peptides from prolipoproteins. The protein is Lipoprotein signal peptidase of Paraburkholderia phytofirmans (strain DSM 17436 / LMG 22146 / PsJN) (Burkholderia phytofirmans).